Reading from the N-terminus, the 262-residue chain is DNA repair protein RecO (262 aa).

Belongs to the RecO family.

Functionally, involved in DNA repair and RecF pathway recombination. In Acidovorax ebreus (strain TPSY) (Diaphorobacter sp. (strain TPSY)), this protein is DNA repair protein RecO.